The sequence spans 187 residues: Anterior gradient protein 1 (187 aa).

The N-terminal stretch at Met-1–Ala-20 is a signal peptide.

Belongs to the AGR family.

It localises to the secreted. Functionally, probably involved in cement gland formation. This chain is Anterior gradient protein 1 (ag1), found in Xenopus tropicalis (Western clawed frog).